The following is a 160-amino-acid chain: Thialysine N-epsilon-acetyltransferase (160 aa).

In terms of domain architecture, N-acetyltransferase spans 4-159 (FEIVTVTPDH…DGAAINKFAD (156 aa)). Residues 84 to 86 (LYI), 92 to 97 (RMGLAR), 123 to 126 (NKNA), and 130 to 133 (YDTV) each bind acetyl-CoA.

Belongs to the acetyltransferase family. As to quaternary structure, homodimer.

The catalysed reaction is S-(2-aminoethyl)-L-cysteine + acetyl-CoA = S-(2-acetamidoethyl)-L-cysteine + CoA + H(+). The enzyme catalyses O-(2-aminoethyl)-L-serine + acetyl-CoA = O-(2-acetamidoethyl)-L-serine + CoA + H(+). It carries out the reaction S-(2-aminoethyl)-homocysteine + acetyl-CoA = S-(2-acetamidoethyl)-homocysteine + CoA + H(+). In terms of biological role, catalyzes the N-acetylation of the amino acid thialysine (S-(2-aminoethyl)-L-cysteine), a L-lysine analog with the 4-methylene group substituted with a sulfur. Substrate specificity: thialysine &gt; O-(2-aminoethyl)-L-serine &gt; S-(2-aminoethyl)-D,L-homocysteine. Does not act on polyamines, such as spermidine and spermine, nor on diamines putrescine and cadaverine. This Caenorhabditis elegans protein is Thialysine N-epsilon-acetyltransferase.